Reading from the N-terminus, the 106-residue chain is Immunoglobulin lambda constant 6 (106 aa).

The Ig-like domain maps to 7–101; that stretch reads PSVTLFPPSS…EGSTVEKTVA (95 aa). Residues C28 and C87 are joined by a disulfide bond.

In terms of assembly, immunoglobulins are composed of two identical heavy chains and two identical light chains; disulfide-linked.

Its subcellular location is the secreted. The protein localises to the cell membrane. Constant region of immunoglobulin light chains. Immunoglobulins, also known as antibodies, are membrane-bound or secreted glycoproteins produced by B lymphocytes. In the recognition phase of humoral immunity, the membrane-bound immunoglobulins serve as receptors which, upon binding of a specific antigen, trigger the clonal expansion and differentiation of B lymphocytes into immunoglobulins-secreting plasma cells. Secreted immunoglobulins mediate the effector phase of humoral immunity, which results in the elimination of bound antigens. The antigen binding site is formed by the variable domain of one heavy chain, together with that of its associated light chain. Thus, each immunoglobulin has two antigen binding sites with remarkable affinity for a particular antigen. The variable domains are assembled by a process called V-(D)-J rearrangement and can then be subjected to somatic hypermutations which, after exposure to antigen and selection, allow affinity maturation for a particular antigen. This is Immunoglobulin lambda constant 6 from Homo sapiens (Human).